The primary structure comprises 401 residues: Nodal homolog 3-B (401 aa).

Residues 1-18 (MALLNLFFCLVFSSPLMA) form the signal peptide. Residues 19 to 274 (MPPVLQGRKS…KVNGFRRLRR (256 aa)) constitute a propeptide that is removed on maturation. N-linked (GlcNAc...) asparagine glycans are attached at residues asparagine 168, asparagine 337, asparagine 341, and asparagine 344. 2 cysteine pairs are disulfide-bonded: cysteine 299–cysteine 365 and cysteine 328–cysteine 396.

Belongs to the TGF-beta family. In terms of assembly, monomer. The propeptide region interacts with bmp4 in a non-covalent manner. In terms of tissue distribution, expressed in the dorsal marginal region of late blastula, becoming restricted to the dorsal blastopore lip (Spemann organizer) at the early gastrula stage.

It is found in the secreted. In terms of biological role, exhibits mesoderm-dorsalizing activity and neural-inducing activity, but lacks mesoderm-inducing activity. Regulates the expression of specific mesodermal and neural genes. Induces convergent extension movements at the embryonic midline by activating the fgf signaling pathway to induce t/bra expression in the organizer region. Acts with wnt11 to induce Spemann organizer cells and induce axis formation. The unprocessed protein antagonizes bmp-signaling. This chain is Nodal homolog 3-B (nodal3-b), found in Xenopus laevis (African clawed frog).